A 104-amino-acid chain; its full sequence is UPF0213 protein PA3854 (104 aa).

Positions 13 to 88 (KCWSVYLVRA…KALSKRAKER (76 aa)) constitute a GIY-YIG domain.

Belongs to the UPF0213 family.

The polypeptide is UPF0213 protein PA3854 (Pseudomonas aeruginosa (strain ATCC 15692 / DSM 22644 / CIP 104116 / JCM 14847 / LMG 12228 / 1C / PRS 101 / PAO1)).